A 375-amino-acid polypeptide reads, in one-letter code: Beta sliding clamp (375 aa).

This sequence belongs to the beta sliding clamp family. As to quaternary structure, forms a ring-shaped head-to-tail homodimer around DNA which binds and tethers DNA polymerases and other proteins to the DNA. The DNA replisome complex has a single clamp-loading complex (3 tau and 1 each of delta, delta', psi and chi subunits) which binds 3 Pol III cores (1 core on the leading strand and 2 on the lagging strand) each with a beta sliding clamp dimer. Additional proteins in the replisome are other copies of gamma, psi and chi, Ssb, DNA helicase and RNA primase.

Its subcellular location is the cytoplasm. Confers DNA tethering and processivity to DNA polymerases and other proteins. Acts as a clamp, forming a ring around DNA (a reaction catalyzed by the clamp-loading complex) which diffuses in an ATP-independent manner freely and bidirectionally along dsDNA. Initially characterized for its ability to contact the catalytic subunit of DNA polymerase III (Pol III), a complex, multichain enzyme responsible for most of the replicative synthesis in bacteria; Pol III exhibits 3'-5' exonuclease proofreading activity. The beta chain is required for initiation of replication as well as for processivity of DNA replication. The polypeptide is Beta sliding clamp (dnaN) (Synechococcus elongatus (strain ATCC 33912 / PCC 7942 / FACHB-805) (Anacystis nidulans R2)).